A 256-amino-acid polypeptide reads, in one-letter code: Deoxyribose-phosphate aldolase (256 aa).

Residue aspartate 102 is the Proton donor/acceptor of the active site. Residue lysine 165 is the Schiff-base intermediate with acetaldehyde of the active site. Lysine 197 serves as the catalytic Proton donor/acceptor.

The protein belongs to the DeoC/FbaB aldolase family. DeoC type 2 subfamily.

It localises to the cytoplasm. It catalyses the reaction 2-deoxy-D-ribose 5-phosphate = D-glyceraldehyde 3-phosphate + acetaldehyde. The protein operates within carbohydrate degradation; 2-deoxy-D-ribose 1-phosphate degradation; D-glyceraldehyde 3-phosphate and acetaldehyde from 2-deoxy-alpha-D-ribose 1-phosphate: step 2/2. Its function is as follows. Catalyzes a reversible aldol reaction between acetaldehyde and D-glyceraldehyde 3-phosphate to generate 2-deoxy-D-ribose 5-phosphate. The sequence is that of Deoxyribose-phosphate aldolase from Shewanella sp. (strain MR-7).